A 366-amino-acid polypeptide reads, in one-letter code: Tubulin-like protein CetZ (366 aa).

GTP is bound by residues 10-14 (QCGTK), 103-105 (GTG), Glu136, Asn163, and Asn181.

The protein belongs to the CetZ family.

The protein resides in the cytoplasm. In terms of biological role, involved in cell shape control. The sequence is that of Tubulin-like protein CetZ from Pyrococcus furiosus (strain ATCC 43587 / DSM 3638 / JCM 8422 / Vc1).